Reading from the N-terminus, the 133-residue chain is Fluoride-specific ion channel FluC (133 aa).

The next 4 membrane-spanning stretches (helical) occupy residues Val-5–Leu-25, Val-43–Ile-63, Val-76–Leu-96, and Ile-108–Leu-128. The Na(+) site is built by Gly-83 and Thr-86.

This sequence belongs to the fluoride channel Fluc/FEX (TC 1.A.43) family.

The protein resides in the cell inner membrane. It catalyses the reaction fluoride(in) = fluoride(out). Its activity is regulated as follows. Na(+) is not transported, but it plays an essential structural role and its presence is essential for fluoride channel function. In terms of biological role, fluoride-specific ion channel. Important for reducing fluoride concentration in the cell, thus reducing its toxicity. The protein is Fluoride-specific ion channel FluC of Saccharophagus degradans (strain 2-40 / ATCC 43961 / DSM 17024).